A 243-amino-acid chain; its full sequence is Histone H2B.2 (243 aa).

Residue Ala2 is modified to N,N,N-trimethylalanine; alternate. Residue Ala2 is modified to N,N-dimethylalanine; alternate. Ala2 is modified (N-methylalanine; alternate). The disordered stretch occupies residues 67–145; the sequence is PDERSLPVGE…KKKKKKKRDD (79 aa). A compositionally biased stretch (basic and acidic residues) spans 120–132; the sequence is GTLKKTDKVEKKQ. A compositionally biased stretch (basic residues) spans 133-142; the sequence is ENKKKKKKKK.

It belongs to the histone H2B family. As to quaternary structure, the nucleosome is a histone octamer containing two molecules each of H2A, H2B, H3 and H4 assembled in one H3-H4 heterotetramer and two H2A-H2B heterodimers. The octamer wraps approximately 147 bp of DNA. Post-translationally, can be acetylated to form H2BK6ac.

It is found in the nucleus. Its subcellular location is the chromosome. Core component of nucleosome. Nucleosomes wrap and compact DNA into chromatin, limiting DNA accessibility to the cellular machineries which require DNA as a template. Histones thereby play a central role in transcription regulation, DNA repair, DNA replication and chromosomal stability. DNA accessibility is regulated via a complex set of post-translational modifications of histones, also called histone code, and nucleosome remodeling. This is Histone H2B.2 from Arabidopsis thaliana (Mouse-ear cress).